A 101-amino-acid chain; its full sequence is NADH-quinone oxidoreductase subunit K (101 aa).

3 consecutive transmembrane segments (helical) span residues 5-25, 30-50, and 62-82; these read PNWY…GVLF, IVVL…LVTF, and LVFF…AIVI.

It belongs to the complex I subunit 4L family. NDH-1 is composed of 14 different subunits. Subunits NuoA, H, J, K, L, M, N constitute the membrane sector of the complex.

Its subcellular location is the cell inner membrane. It catalyses the reaction a quinone + NADH + 5 H(+)(in) = a quinol + NAD(+) + 4 H(+)(out). In terms of biological role, NDH-1 shuttles electrons from NADH, via FMN and iron-sulfur (Fe-S) centers, to quinones in the respiratory chain. The immediate electron acceptor for the enzyme in this species is believed to be a menaquinone. Couples the redox reaction to proton translocation (for every two electrons transferred, four hydrogen ions are translocated across the cytoplasmic membrane), and thus conserves the redox energy in a proton gradient. The sequence is that of NADH-quinone oxidoreductase subunit K from Salinibacter ruber (strain DSM 13855 / M31).